The following is a 216-amino-acid chain: MKFNSDMLKIYFVAGTQDVANKADFLPKVEEILQAGATAFQLREKGYNSIDNPAELTELAEKCHQLTQKYHVPLFIDDDVDLALAIHAEGIHVGQKDEKIESVLKRVQGSMIVGLSCNTEAQVKQANQLDGIDYLGTGTVFETTSKADAGAALGVAKLQELVELSHYPIVAIGGITLDNLPQTMATGVKGFAAISMFTQMTAVPTQMQKIKAIVKG.

Residues 41 to 45 and D77 contribute to the 4-amino-2-methyl-5-(diphosphooxymethyl)pyrimidine site; that span reads QLREK. Residues D78 and D97 each contribute to the Mg(2+) site. Residue S116 participates in 4-amino-2-methyl-5-(diphosphooxymethyl)pyrimidine binding. 143–145 is a binding site for 2-[(2R,5Z)-2-carboxy-4-methylthiazol-5(2H)-ylidene]ethyl phosphate; sequence TTS. 4-amino-2-methyl-5-(diphosphooxymethyl)pyrimidine is bound at residue K146. 2-[(2R,5Z)-2-carboxy-4-methylthiazol-5(2H)-ylidene]ethyl phosphate-binding positions include G174 and 194-195; that span reads IS.

It belongs to the thiamine-phosphate synthase family. Mg(2+) serves as cofactor.

The catalysed reaction is 2-[(2R,5Z)-2-carboxy-4-methylthiazol-5(2H)-ylidene]ethyl phosphate + 4-amino-2-methyl-5-(diphosphooxymethyl)pyrimidine + 2 H(+) = thiamine phosphate + CO2 + diphosphate. The enzyme catalyses 2-(2-carboxy-4-methylthiazol-5-yl)ethyl phosphate + 4-amino-2-methyl-5-(diphosphooxymethyl)pyrimidine + 2 H(+) = thiamine phosphate + CO2 + diphosphate. It catalyses the reaction 4-methyl-5-(2-phosphooxyethyl)-thiazole + 4-amino-2-methyl-5-(diphosphooxymethyl)pyrimidine + H(+) = thiamine phosphate + diphosphate. It participates in cofactor biosynthesis; thiamine diphosphate biosynthesis; thiamine phosphate from 4-amino-2-methyl-5-diphosphomethylpyrimidine and 4-methyl-5-(2-phosphoethyl)-thiazole: step 1/1. Condenses 4-methyl-5-(beta-hydroxyethyl)thiazole monophosphate (THZ-P) and 2-methyl-4-amino-5-hydroxymethyl pyrimidine pyrophosphate (HMP-PP) to form thiamine monophosphate (TMP). This is Thiamine-phosphate synthase from Pediococcus pentosaceus (strain ATCC 25745 / CCUG 21536 / LMG 10740 / 183-1w).